We begin with the raw amino-acid sequence, 528 residues long: UDP-glucuronosyltransferase 2A1 (528 aa).

Residues 1–21 (MLKNILLCSLQISLLGMSLGG) form the signal peptide. Residues 22 to 494 (NVLIWPMEGS…FQYHSLDVIG (473 aa)) are Extracellular-facing. N-linked (GlcNAc...) asparagine glycosylation occurs at Asn-49. Lys-135 bears the N6-succinyllysine mark. The N-linked (GlcNAc...) asparagine glycan is linked to Asn-314. A helical transmembrane segment spans residues 495–515 (FLLACVASAILLVAKCCLFIF). Residues 516 to 528 (QKVGKTGKKKKRD) lie on the Cytoplasmic side of the membrane.

Belongs to the UDP-glycosyltransferase family.

It localises to the membrane. The enzyme catalyses glucuronate acceptor + UDP-alpha-D-glucuronate = acceptor beta-D-glucuronoside + UDP + H(+). It carries out the reaction 16beta,17beta-estriol + UDP-alpha-D-glucuronate = 16beta,17beta-estriol 16-O-(beta-D-glucuronate) + UDP + H(+). The catalysed reaction is 16alpha,17alpha-estriol + UDP-alpha-D-glucuronate = 16alpha,17alpha-estriol 16-O-(beta-D-glucuronate) + UDP + H(+). It catalyses the reaction 17alpha-estradiol + UDP-alpha-D-glucuronate = 17alpha-estradiol 17-O-(beta-D-glucuronate) + UDP + H(+). The enzyme catalyses 17alpha-estradiol + UDP-alpha-D-glucuronate = 17alpha-estradiol 3-O-(beta-D-glucuronate) + UDP + H(+). It carries out the reaction 17beta-estradiol + UDP-alpha-D-glucuronate = 17beta-estradiol 3-O-(beta-D-glucuronate) + UDP + H(+). The catalysed reaction is 17beta-estradiol + UDP-alpha-D-glucuronate = 17beta-estradiol 17-O-(beta-D-glucuronate) + UDP + H(+). It catalyses the reaction testosterone + UDP-alpha-D-glucuronate = testosterone 17-O-(beta-D-glucuronate) + UDP + H(+). The enzyme catalyses epitestosterone + UDP-alpha-D-glucuronate = epitestosterone 17-O-(beta-D-glucuronate) + UDP + H(+). It carries out the reaction lithocholate + UDP-alpha-D-glucuronate = lithocholoyl-3-O-(beta-D-glucuronate) + UDP + H(+). The catalysed reaction is lithocholate + UDP-alpha-D-glucuronate = lithocholoyl-24-O-(beta-D-glucuronate) + UDP. It catalyses the reaction deoxycholate + UDP-alpha-D-glucuronate = deoxycholoyl-24-O-(beta-D-glucuronate) + UDP. The enzyme catalyses hyodeoxycholate + UDP-alpha-D-glucuronate = hyodeoxycholate 6-O-(beta-D-glucuronate) + UDP + H(+). It carries out the reaction hyocholate + UDP-alpha-D-glucuronate = hyocholoyl-24-O-(beta-D-glucuronate) + UDP. Its function is as follows. UDP-glucuronosyltransferase (UGT) that catalyzes phase II biotransformation reactions in which lipophilic substrates are conjugated with glucuronic acid to increase the metabolite's water solubility, thereby facilitating excretion into either the urine or bile. Essential for the elimination and detoxification of drugs, xenobiotics and endogenous compounds. Catalyzes the glucuronidation of endogenous steroid hormones such as androgens (testosterones) and estrogens (estradiol and estriol). Contributes to bile acid (BA) detoxification by catalyzing the glucuronidation of BA substrates, which are natural detergents for dietary lipids absorption. Shows a high affinity to aliphatic odorants such as citronellol as well as olfactory tissue specificity, and therefore may be involved in olfaction. The polypeptide is UDP-glucuronosyltransferase 2A1 (Mus musculus (Mouse)).